We begin with the raw amino-acid sequence, 175 residues long: Arginine repressor (175 aa).

The interval 1–23 (MSVSTPERGGAEQGKGPAIARTR) is disordered.

The protein belongs to the ArgR family.

Its subcellular location is the cytoplasm. It participates in amino-acid biosynthesis; L-arginine biosynthesis [regulation]. Its function is as follows. Regulates arginine biosynthesis genes. The sequence is that of Arginine repressor from Nocardia farcinica (strain IFM 10152).